A 215-amino-acid polypeptide reads, in one-letter code: UPF0319 protein VVA1446 (215 aa).

A signal peptide spans 1 to 21 (MNIIKPLTCILAMSISGLATA).

This sequence belongs to the UPF0319 family.

This Vibrio vulnificus (strain YJ016) protein is UPF0319 protein VVA1446.